Here is a 607-residue protein sequence, read N- to C-terminus: UvrABC system protein C (607 aa).

Positions 15 to 94 constitute a GIY-YIG domain; it reads ENPGVYLMKN…IKRHRPYFNV (80 aa). The region spanning 204–239 is the UVR domain; sequence DQVLKLLIRLMNEASARLDYETAALRRDQIASIKEV.

This sequence belongs to the UvrC family. Interacts with UvrB in an incision complex.

The protein localises to the cytoplasm. Its function is as follows. The UvrABC repair system catalyzes the recognition and processing of DNA lesions. UvrC both incises the 5' and 3' sides of the lesion. The N-terminal half is responsible for the 3' incision and the C-terminal half is responsible for the 5' incision. The polypeptide is UvrABC system protein C (Dehalococcoides mccartyi (strain CBDB1)).